Consider the following 1414-residue polypeptide: DNA-directed RNA polymerase subunit beta' (1414 aa).

Residues Cys-70, Cys-72, Cys-85, and Cys-88 each coordinate Zn(2+). The Mg(2+) site is built by Asp-460, Asp-462, and Asp-464. Zn(2+)-binding residues include Cys-814, Cys-888, Cys-895, and Cys-898. A compositionally biased stretch (low complexity) spans 1392–1403 (EQALSEALKSSA). Positions 1392 to 1414 (EQALSEALKSSAPQEAKAAQKDE) are disordered.

It belongs to the RNA polymerase beta' chain family. In terms of assembly, the RNAP catalytic core consists of 2 alpha, 1 beta, 1 beta' and 1 omega subunit. When a sigma factor is associated with the core the holoenzyme is formed, which can initiate transcription. It depends on Mg(2+) as a cofactor. Requires Zn(2+) as cofactor.

It carries out the reaction RNA(n) + a ribonucleoside 5'-triphosphate = RNA(n+1) + diphosphate. Its function is as follows. DNA-dependent RNA polymerase catalyzes the transcription of DNA into RNA using the four ribonucleoside triphosphates as substrates. This chain is DNA-directed RNA polymerase subunit beta', found in Coxiella burnetii (strain Dugway 5J108-111).